A 261-amino-acid polypeptide reads, in one-letter code: Chloroplastic import inner membrane translocase subunit HP30-1 (261 aa).

4 helical membrane-spanning segments follow: residues 59-77 (AAVV…GGLM), 113-129 (NFAA…SVMK), 139-155 (SAVV…SLVS), and 163-180 (MNAI…GVFF).

It belongs to the Tim17/Tim22/Tim23 family. As to quaternary structure, probable component of a protein-conducting channel made of HP30-1, HP30-2 and HP20 that mediates the import of transit sequence-less proteins into the chloroplastic inner membrane. Interacts with CEQORH.

It localises to the plastid. The protein localises to the chloroplast inner membrane. Functionally, together with HP30-2 and HP20, triggers the import and insertion of transit sequence-less multi-pass transmembrane proteins (e.g. CEQORH) into the chloroplastic inner membrane. This is Chloroplastic import inner membrane translocase subunit HP30-1 from Arabidopsis thaliana (Mouse-ear cress).